Consider the following 97-residue polypeptide: uncharacterized protein (97 aa).

Positions 72 to 97 are disordered; that stretch reads TVERKRSEHTNSRKKDPSAYTWSDVK. Over residues 73–88 the composition is skewed to basic and acidic residues; sequence VERKRSEHTNSRKKDP.

This sequence belongs to the chlamydial CPn_0121/CT_031/TC_0300 family.

This is an uncharacterized protein from Chlamydia pneumoniae (Chlamydophila pneumoniae).